Here is a 180-residue protein sequence, read N- to C-terminus: MIIAITGTPGVGKTTVARKLAEKLGCKYVNLRDFALEKGIGEVKGDELEVEVDELAYFVEKEFKGKNVVLDGHLSHLMPADLVIVLRAHPKTIAERLKERGYSKDKIGENVEAELVDVILIEALDEHENVIEVDTTGKTPEEVVNEILNLINSGIKRRVGIVDWTKVYEEIIPYLRLGGD.

ATP contacts are provided by G10, G12, K13, T14, and T15. The tract at residues 30 to 50 is NMP; that stretch reads NLRDFALEKGIGEVKGDELEV. The tract at residues 99–109 is LID; that stretch reads ERGYSKDKIGE. ATP-binding residues include R100 and K138.

It belongs to the adenylate kinase family. AK6 subfamily. Interacts with uS11. Not a structural component of 40S pre-ribosomes, but transiently interacts with them by binding to uS11.

The catalysed reaction is AMP + ATP = 2 ADP. It catalyses the reaction ATP + H2O = ADP + phosphate + H(+). Functionally, broad-specificity nucleoside monophosphate (NMP) kinase that catalyzes the reversible transfer of the terminal phosphate group between nucleoside triphosphates and monophosphates. Also has ATPase activity. Involved in the late maturation steps of the 30S ribosomal particles, specifically 16S rRNA maturation. While NMP activity is not required for ribosome maturation, ATPase activity is. Associates transiently with small ribosomal subunit protein uS11. ATP hydrolysis breaks the interaction with uS11. May temporarily remove uS11 from the ribosome to enable a conformational change of the ribosomal RNA that is needed for the final maturation step of the small ribosomal subunit. This chain is Putative adenylate kinase, found in Pyrococcus furiosus (strain ATCC 43587 / DSM 3638 / JCM 8422 / Vc1).